The following is a 227-amino-acid chain: DNA repair protein RecO (227 aa).

Belongs to the RecO family.

Functionally, involved in DNA repair and RecF pathway recombination. The sequence is that of DNA repair protein RecO from Pseudomonas savastanoi pv. phaseolicola (strain 1448A / Race 6) (Pseudomonas syringae pv. phaseolicola (strain 1448A / Race 6)).